The sequence spans 461 residues: V-type ATP synthase beta chain (461 aa).

The protein belongs to the ATPase alpha/beta chains family.

Its function is as follows. Produces ATP from ADP in the presence of a proton gradient across the membrane. The V-type beta chain is a regulatory subunit. This chain is V-type ATP synthase beta chain, found in Clostridium botulinum (strain Kyoto / Type A2).